Reading from the N-terminus, the 148-residue chain is Ribonuclease H (148 aa).

Residues 3–144 (AEETVEIFTD…ADALANRGIE (142 aa)) form the RNase H type-1 domain. Residues aspartate 12, glutamate 50, aspartate 72, and aspartate 136 each contribute to the Mg(2+) site. Positions 129–148 (HPENERADALANRGIEELKG) are disordered.

It belongs to the RNase H family. In terms of assembly, monomer. Mg(2+) is required as a cofactor.

The protein localises to the cytoplasm. It catalyses the reaction Endonucleolytic cleavage to 5'-phosphomonoester.. Its function is as follows. Endonuclease that specifically degrades the RNA of RNA-DNA hybrids. The chain is Ribonuclease H from Dechloromonas aromatica (strain RCB).